The following is a 151-amino-acid chain: Flagellar assembly factor FliW (151 aa).

The protein belongs to the FliW family. Interacts with translational regulator CsrA and flagellin(s).

The protein resides in the cytoplasm. In terms of biological role, acts as an anti-CsrA protein, binds CsrA and prevents it from repressing translation of its target genes, one of which is flagellin. Binds to flagellin and participates in the assembly of the flagellum. The chain is Flagellar assembly factor FliW from Natranaerobius thermophilus (strain ATCC BAA-1301 / DSM 18059 / JW/NM-WN-LF).